A 55-amino-acid chain; its full sequence is Putative virulence-regulating protein PA2146 (55 aa).

The disordered stretch occupies residues 1–55 (MAQHQGGKGNFAEDPKRASEAGKKGGQASGGNFKNDPQRASEAGKKGGQRSHGGN). 2 stretches are compositionally biased toward basic and acidic residues: residues 11–23 (FAEDPKRASEAGK) and 36–45 (DPQRASEAGK).

It belongs to the con-10 family.

May be involved in the regulation of the production of pyocyanine, one of the major virulence factors secreted by P.aeruginosa, and other virulence factors. The chain is Putative virulence-regulating protein PA2146 from Pseudomonas aeruginosa (strain ATCC 15692 / DSM 22644 / CIP 104116 / JCM 14847 / LMG 12228 / 1C / PRS 101 / PAO1).